A 425-amino-acid polypeptide reads, in one-letter code: Gamma-glutamyl phosphate reductase (425 aa).

This sequence belongs to the gamma-glutamyl phosphate reductase family.

The protein localises to the cytoplasm. The enzyme catalyses L-glutamate 5-semialdehyde + phosphate + NADP(+) = L-glutamyl 5-phosphate + NADPH + H(+). It participates in amino-acid biosynthesis; L-proline biosynthesis; L-glutamate 5-semialdehyde from L-glutamate: step 2/2. Its function is as follows. Catalyzes the NADPH-dependent reduction of L-glutamate 5-phosphate into L-glutamate 5-semialdehyde and phosphate. The product spontaneously undergoes cyclization to form 1-pyrroline-5-carboxylate. This chain is Gamma-glutamyl phosphate reductase, found in Opitutus terrae (strain DSM 11246 / JCM 15787 / PB90-1).